The primary structure comprises 305 residues: Nitrogen assimilation regulatory protein nac (305 aa).

Positions 1 to 58 (MNFRRLKYFVKIVDIGSLTQAAEVLHIAQPALSQQVATLEGELNQQLLIRTKRGVTPT) constitute an HTH lysR-type domain. Residues 18-37 (LTQAAEVLHIAQPALSQQVA) constitute a DNA-binding region (H-T-H motif).

This sequence belongs to the LysR transcriptional regulatory family.

Functionally, transcriptional activator for the hut, put and ure operons and repressor for the gdh and gltB operons in response to nitrogen limitation. Negative regulator of its own expression. This chain is Nitrogen assimilation regulatory protein nac (nac), found in Escherichia coli (strain K12).